The following is a 230-amino-acid chain: Demethylmenaquinone methyltransferase (230 aa).

Residues Thr-62, Asp-80, 100–101 (DA), and Ser-117 contribute to the S-adenosyl-L-methionine site.

The protein belongs to the class I-like SAM-binding methyltransferase superfamily. MenG/UbiE family.

It carries out the reaction a 2-demethylmenaquinol + S-adenosyl-L-methionine = a menaquinol + S-adenosyl-L-homocysteine + H(+). Its pathway is quinol/quinone metabolism; menaquinone biosynthesis; menaquinol from 1,4-dihydroxy-2-naphthoate: step 2/2. In terms of biological role, methyltransferase required for the conversion of demethylmenaquinol (DMKH2) to menaquinol (MKH2). This is Demethylmenaquinone methyltransferase from Mycobacterium sp. (strain KMS).